The following is a 426-amino-acid chain: MISQLPDPLICHILSHLPIKDLVTTRVLSTRWRSLWLWLPCLELNSLYFPDFNAFVSFGDKFFDSNRVSCINKFKLYIYGYDVGVDDPSYLTSWIDAAVKCKIQHLHVQCLPAKYIYEMPLSLYICETLVYLKLCRVMLDDAEFVSLPCLKTIHLEYVWFPNEANLERFVSCCPVLEELKIYGCGNENAITLRLLSRSLKKLSINILKSMCDFHSEVVIDAPLLSYLKINDNVSERYIVNNLESNAKLDISLPFGLLDFDEASVSSRTDSIHSFLRGILKVSDMTIWVDTFKLICKYSELESLPRFGYMSRLHVTLCIYDLKWLPTFLESCPNLKSLILVCVGDNDEMLSEEMIQFGSSLVPECLLSSLEFVDIRIPFRGHLEVMKLVRYFLENSAILKKLSLDHDIFKKLFTIPRRSTKCQVVFI.

In terms of domain architecture, F-box spans 1-45; the sequence is MISQLPDPLICHILSHLPIKDLVTTRVLSTRWRSLWLWLPCLELN. The 53-residue stretch at 353 to 405 folds into the FBD domain; it reads MIQFGSSLVPECLLSSLEFVDIRIPFRGHLEVMKLVRYFLENSAILKKLSLDH.

The chain is Putative FBD-associated F-box protein At5g53635 from Arabidopsis thaliana (Mouse-ear cress).